A 158-amino-acid polypeptide reads, in one-letter code: NAD(P)H-quinone oxidoreductase subunit J, chloroplastic (158 aa).

The protein belongs to the complex I 30 kDa subunit family. As to quaternary structure, NDH is composed of at least 16 different subunits, 5 of which are encoded in the nucleus.

The protein localises to the plastid. Its subcellular location is the chloroplast thylakoid membrane. The enzyme catalyses a plastoquinone + NADH + (n+1) H(+)(in) = a plastoquinol + NAD(+) + n H(+)(out). It carries out the reaction a plastoquinone + NADPH + (n+1) H(+)(in) = a plastoquinol + NADP(+) + n H(+)(out). NDH shuttles electrons from NAD(P)H:plastoquinone, via FMN and iron-sulfur (Fe-S) centers, to quinones in the photosynthetic chain and possibly in a chloroplast respiratory chain. The immediate electron acceptor for the enzyme in this species is believed to be plastoquinone. Couples the redox reaction to proton translocation, and thus conserves the redox energy in a proton gradient. The protein is NAD(P)H-quinone oxidoreductase subunit J, chloroplastic of Lemna minor (Common duckweed).